Reading from the N-terminus, the 355-residue chain is MLADKLKPFLTRFDELNTLLSDVNISNDISKMTALSKEQKNLEPIVEKAKEYLKTLDDIEENKLLLSDPELGELAKEELKNLELLKPNLEEELKILLLPKDPNDDKNIFLEIRAGTGGDEASLFVGDLVKAYIRYAENRDYKYEIVSSSEGSVGGFKEIIILIKGNGAYSRLKYEGGTHRVQRVPETESQGRVHTSAITVAIMPEVDDVEIQINPNDLKIDVMRSSGHGGQSVNTTDSAVRITHIPTGIVVVNQDGKSQHKNKESAMKVLKARLFEMQEQERLAKESEARKSQVGSGDRSERIRTYNFPQNRISDHRINLTLYRLDAILEGGLFDEIVEPLIAYYQAEALKQENL.

At glutamine 231 the chain carries N5-methylglutamine. The tract at residues 283-303 is disordered; that stretch reads LAKESEARKSQVGSGDRSERI.

The protein belongs to the prokaryotic/mitochondrial release factor family. Post-translationally, methylated by PrmC. Methylation increases the termination efficiency of RF1.

It localises to the cytoplasm. Its function is as follows. Peptide chain release factor 1 directs the termination of translation in response to the peptide chain termination codons UAG and UAA. The chain is Peptide chain release factor 1 from Campylobacter lari (strain RM2100 / D67 / ATCC BAA-1060).